The sequence spans 315 residues: MGSLNESSKVLVIGGTGYLGKRLVKASLDAGHDTYVMHRPEIGVDIEKVQLLLSFKMQGAHLVSASFDDHRSLVDAVSLVDVVICAISGVHIRSHQILLQLKLVQAIKEAGNVKRFLPSEFGTDPARMGDAMEPGRVTFDDKMVVRRAIEEAAIPFTYVSANCFAGYFLGGLCQPGSILPSRDHVTLLGDGNQKGVYVDENDIAAYTLKAIDDPRTLNKTLYIKPPKNILSQRQVVGIWEKHIGKQLHKTLLSEQDFLAAMKEQDYAEQVGLTHYYHVCYEGCLTNFEVEQDQEASKLYPDVRYTTVEEYLKRYV.

NADP(+)-binding positions include 14-20, Arg-39, and Lys-48; that span reads GGTGYLG. Lys-142 (proton acceptor) is an active-site residue. Arg-146 is a binding site for NADP(+). Substrate is bound at residue His-274.

The protein belongs to the NmrA-type oxidoreductase family. Isoflavone reductase subfamily. As to quaternary structure, dimer.

It carries out the reaction (+)-lariciresinol + NADP(+) = (+)-pinoresinol + NADPH + H(+). The catalysed reaction is (-)-secoisolariciresinol + NADP(+) = (+)-lariciresinol + NADPH + H(+). Reductase involved in lignan (-)-hinokinin biosynthesis. Catalyzes the enantioselective conversion of (+)-pinoresinol into (+)-lariciresinol and of (+)-lariciresinol into (-)-secoisolariciresinol. Abstracts the 4R-hydride from the NADPH cofactor during catalysis. Has also a low phenylcoumaran benzylic ether reductase activity. The sequence is that of Bifunctional pinoresinol-lariciresinol reductase (PLR_Lc1) from Linum corymbulosum (Linum).